The sequence spans 225 residues: MKKFFIIGTDTEVGKTYISTKLIEVCEHQNIKSLCLKPVASGQSQFSELCEDVESILNAYKHKFTAAEINLISFNQAVAPHIIAAKTKVDISIGNLKQFIENKYNQDLDILFIEGAGGLLTPYSDHTTQLDLIKALEIPVILVSAIKVGCINHTLLTINELGRHNIKLAGWIANCNDSNIKYTDEQISTIEELSGYKCSTKISQNADYLDFIDLSKILISPEENE.

Position 12–17 (12–17 (EVGKTY)) interacts with ATP. Mg(2+) is bound at residue T16. The active site involves K37. S41 lines the substrate pocket. Residues D52, 114-117 (EGAG), and 174-175 (NC) contribute to the ATP site. Mg(2+) contacts are provided by D52 and E114.

It belongs to the dethiobiotin synthetase family. As to quaternary structure, homodimer. Mg(2+) is required as a cofactor.

The protein localises to the cytoplasm. The catalysed reaction is (7R,8S)-7,8-diammoniononanoate + CO2 + ATP = (4R,5S)-dethiobiotin + ADP + phosphate + 3 H(+). Its pathway is cofactor biosynthesis; biotin biosynthesis; biotin from 7,8-diaminononanoate: step 1/2. Its function is as follows. Catalyzes a mechanistically unusual reaction, the ATP-dependent insertion of CO2 between the N7 and N8 nitrogen atoms of 7,8-diaminopelargonic acid (DAPA, also called 7,8-diammoniononanoate) to form a ureido ring. In Francisella tularensis subsp. novicida (strain U112), this protein is ATP-dependent dethiobiotin synthetase BioD.